A 385-amino-acid polypeptide reads, in one-letter code: Leucine aminopeptidase 1 (385 aa).

Residues 1–20 (MKFPSLLSLGVAASTTIVAA) form the signal peptide. A propeptide spanning residues 21 to 87 (VPDQKPIGDI…FPKTFAQTTV (67 aa)) is cleaved from the precursor. A glycan (N-linked (GlcNAc...) asparagine) is linked at Asn-177. The Zn(2+) site is built by His-185, Asp-204, Glu-243, and Asp-270. A disulfide bond links Cys-319 and Cys-323. His-352 lines the Zn(2+) pocket.

This sequence belongs to the peptidase M28 family. M28E subfamily. In terms of assembly, monomer. Requires Zn(2+) as cofactor.

The protein localises to the secreted. Functionally, extracellular aminopeptidase that allows assimilation of proteinaceous substrates. The chain is Leucine aminopeptidase 1 (LAP1) from Ajellomyces capsulatus (strain G186AR / H82 / ATCC MYA-2454 / RMSCC 2432) (Darling's disease fungus).